The chain runs to 61 residues: Small ribosomal subunit protein uS14B (61 aa).

Residues cysteine 24, cysteine 27, cysteine 40, and cysteine 43 each contribute to the Zn(2+) site.

The protein belongs to the universal ribosomal protein uS14 family. Zinc-binding uS14 subfamily. Part of the 30S ribosomal subunit. Contacts proteins S3 and S10. The cofactor is Zn(2+).

Functionally, binds 16S rRNA, required for the assembly of 30S particles and may also be responsible for determining the conformation of the 16S rRNA at the A site. The chain is Small ribosomal subunit protein uS14B from Lacticaseibacillus paracasei (strain ATCC 334 / BCRC 17002 / CCUG 31169 / CIP 107868 / KCTC 3260 / NRRL B-441) (Lactobacillus paracasei).